A 244-amino-acid polypeptide reads, in one-letter code: tRNA pseudouridine synthase A (244 aa).

The active-site Nucleophile is the Asp-55. Tyr-113 is a substrate binding site.

Belongs to the tRNA pseudouridine synthase TruA family. As to quaternary structure, homodimer.

The catalysed reaction is uridine(38/39/40) in tRNA = pseudouridine(38/39/40) in tRNA. Functionally, formation of pseudouridine at positions 38, 39 and 40 in the anticodon stem and loop of transfer RNAs. The polypeptide is tRNA pseudouridine synthase A (Phytoplasma mali (strain AT)).